A 188-amino-acid polypeptide reads, in one-letter code: Elongation factor P (188 aa).

The protein belongs to the elongation factor P family.

It is found in the cytoplasm. The protein operates within protein biosynthesis; polypeptide chain elongation. Involved in peptide bond synthesis. Stimulates efficient translation and peptide-bond synthesis on native or reconstituted 70S ribosomes in vitro. Probably functions indirectly by altering the affinity of the ribosome for aminoacyl-tRNA, thus increasing their reactivity as acceptors for peptidyl transferase. The polypeptide is Elongation factor P (Methylobacterium sp. (strain 4-46)).